The sequence spans 332 residues: Biotin synthase (332 aa).

A Radical SAM core domain is found at 47 to 273 (YYGNKVKLNM…MNPTKEIRIA (227 aa)). The [4Fe-4S] cluster site is built by Cys65, Cys69, and Cys72. Residues Cys109, Cys141, Cys201, and Arg271 each contribute to the [2Fe-2S] cluster site.

The protein belongs to the radical SAM superfamily. Biotin synthase family. As to quaternary structure, homodimer. Requires [4Fe-4S] cluster as cofactor. It depends on [2Fe-2S] cluster as a cofactor.

The catalysed reaction is (4R,5S)-dethiobiotin + (sulfur carrier)-SH + 2 reduced [2Fe-2S]-[ferredoxin] + 2 S-adenosyl-L-methionine = (sulfur carrier)-H + biotin + 2 5'-deoxyadenosine + 2 L-methionine + 2 oxidized [2Fe-2S]-[ferredoxin]. The protein operates within cofactor biosynthesis; biotin biosynthesis; biotin from 7,8-diaminononanoate: step 2/2. Its function is as follows. Catalyzes the conversion of dethiobiotin (DTB) to biotin by the insertion of a sulfur atom into dethiobiotin via a radical-based mechanism. In Geobacillus thermodenitrificans (strain NG80-2), this protein is Biotin synthase.